Consider the following 169-residue polypeptide: Cysteine synthase B (169 aa).

Lys45 is subject to N6-(pyridoxal phosphate)lysine. Asn75 is a binding site for pyridoxal 5'-phosphate. The disordered stretch occupies residues 146 to 169 (ANGDNPEAHYTSTGPEIWRQTGGT).

Belongs to the cysteine synthase/cystathionine beta-synthase family. It depends on pyridoxal 5'-phosphate as a cofactor.

The catalysed reaction is O-acetyl-L-serine + hydrogen sulfide = L-cysteine + acetate. It participates in amino-acid biosynthesis; L-cysteine biosynthesis; L-cysteine from L-serine: step 2/2. The polypeptide is Cysteine synthase B (cysM) (Pseudomonas syringae pv. syringae).